We begin with the raw amino-acid sequence, 189 residues long: dCTP deaminase, dUMP-forming (189 aa).

DCTP contacts are provided by residues 101-106, aspartate 119, 127-129, glutamine 148, tyrosine 162, lysine 170, and glutamine 174; these read KSSLGR and TLE. Glutamate 129 acts as the Proton donor/acceptor in catalysis. Residues 163 to 189 form a disordered region; that stretch reads GSGKLGSKYQGQRGPTPSKAYLNFPNK.

Belongs to the dCTP deaminase family. Homotrimer.

It catalyses the reaction dCTP + 2 H2O = dUMP + NH4(+) + diphosphate. It participates in pyrimidine metabolism; dUMP biosynthesis; dUMP from dCTP: step 1/1. In terms of biological role, bifunctional enzyme that catalyzes both the deamination of dCTP to dUTP and the hydrolysis of dUTP to dUMP without releasing the toxic dUTP intermediate. In Corynebacterium glutamicum (strain R), this protein is dCTP deaminase, dUMP-forming.